The following is a 488-amino-acid chain: 3-octaprenyl-4-hydroxybenzoate carboxy-lyase (488 aa).

Asparagine 172 is a Mn(2+) binding site. Residues 175-177, 189-191, and 194-195 contribute to the prenylated FMN site; these read IYR, RWL, and RG. Position 238 (glutamate 238) interacts with Mn(2+). Aspartate 287 functions as the Proton donor in the catalytic mechanism.

It belongs to the UbiD family. As to quaternary structure, homohexamer. It depends on prenylated FMN as a cofactor. Requires Mn(2+) as cofactor.

The protein resides in the cell membrane. The catalysed reaction is a 4-hydroxy-3-(all-trans-polyprenyl)benzoate + H(+) = a 2-(all-trans-polyprenyl)phenol + CO2. Its pathway is cofactor biosynthesis; ubiquinone biosynthesis. Functionally, catalyzes the decarboxylation of 3-octaprenyl-4-hydroxy benzoate to 2-octaprenylphenol, an intermediate step in ubiquinone biosynthesis. The polypeptide is 3-octaprenyl-4-hydroxybenzoate carboxy-lyase (Pseudomonas putida (strain ATCC 47054 / DSM 6125 / CFBP 8728 / NCIMB 11950 / KT2440)).